Here is a 184-residue protein sequence, read N- to C-terminus: Isopentenyl-diphosphate Delta-isomerase (184 aa).

2 residues coordinate Mn(2+): H25 and H32. The 135-residue stretch at 30 to 164 (PLHLAFSCWL…PWAFSPWMVL (135 aa)) folds into the Nudix hydrolase domain. The active site involves C67. H69 provides a ligand contact to Mn(2+). E87 serves as a coordination point for Mg(2+). Residues E114 and E116 each contribute to the Mn(2+) site. E116 is an active-site residue.

This sequence belongs to the IPP isomerase type 1 family. In terms of assembly, homodimer. Mg(2+) is required as a cofactor. Requires Mn(2+) as cofactor.

The protein localises to the cytoplasm. It catalyses the reaction isopentenyl diphosphate = dimethylallyl diphosphate. Its pathway is isoprenoid biosynthesis; dimethylallyl diphosphate biosynthesis; dimethylallyl diphosphate from isopentenyl diphosphate: step 1/1. Catalyzes the 1,3-allylic rearrangement of the homoallylic substrate isopentenyl (IPP) to its highly electrophilic allylic isomer, dimethylallyl diphosphate (DMAPP). The chain is Isopentenyl-diphosphate Delta-isomerase from Klebsiella pneumoniae subsp. pneumoniae (strain ATCC 700721 / MGH 78578).